The chain runs to 313 residues: Porphobilinogen deaminase (313 aa).

C241 is modified (S-(dipyrrolylmethanemethyl)cysteine).

It belongs to the HMBS family. In terms of assembly, monomer. The cofactor is dipyrromethane.

It catalyses the reaction 4 porphobilinogen + H2O = hydroxymethylbilane + 4 NH4(+). It participates in porphyrin-containing compound metabolism; protoporphyrin-IX biosynthesis; coproporphyrinogen-III from 5-aminolevulinate: step 2/4. Its function is as follows. Tetrapolymerization of the monopyrrole PBG into the hydroxymethylbilane pre-uroporphyrinogen in several discrete steps. The chain is Porphobilinogen deaminase from Sulfurimonas denitrificans (strain ATCC 33889 / DSM 1251) (Thiomicrospira denitrificans (strain ATCC 33889 / DSM 1251)).